A 386-amino-acid chain; its full sequence is 3-hydroxyisobutyryl-CoA hydrolase, mitochondrial (386 aa).

Residues 1–32 (MGQREMWRLMSRFNAFKRTNTILHHLRMSKHT) constitute a mitochondrion transit peptide. N6-acetyllysine; alternate occurs at positions 55 and 92. An N6-succinyllysine; alternate mark is found at K55 and K92. Substrate-binding residues include E121, G146, E169, and D177. At K221 the chain carries N6-acetyllysine; alternate. At K221 the chain carries N6-succinyllysine; alternate. Position 234 is a phosphoserine (S234). K257 is modified (N6-succinyllysine). K297 is modified (N6-acetyllysine; alternate). Residue K297 is modified to N6-succinyllysine; alternate. K301 is subject to N6-succinyllysine. K353 is modified (N6-acetyllysine; alternate). K353 bears the N6-succinyllysine; alternate mark. At S356 the chain carries Phosphoserine. K360 and K365 each carry N6-acetyllysine. At K377 the chain carries N6-succinyllysine.

Belongs to the enoyl-CoA hydratase/isomerase family. Highly expressed in liver and kidney, also detected in heart, muscle and brain (at protein level). Not detected in lung.

The protein localises to the mitochondrion. It carries out the reaction 3-hydroxy-2-methylpropanoyl-CoA + H2O = 3-hydroxy-2-methylpropanoate + CoA + H(+). It participates in amino-acid degradation; L-valine degradation. In terms of biological role, hydrolyzes 3-hydroxyisobutyryl-CoA (HIBYL-CoA), a saline catabolite. Has high activity toward isobutyryl-CoA. Could be an isobutyryl-CoA dehydrogenase that functions in valine catabolism. Also hydrolyzes 3-hydroxypropanoyl-CoA. In Homo sapiens (Human), this protein is 3-hydroxyisobutyryl-CoA hydrolase, mitochondrial (HIBCH).